Here is a 500-residue protein sequence, read N- to C-terminus: L-arabinose isomerase (500 aa).

Mn(2+)-binding residues include E306, E333, H350, and H450.

This sequence belongs to the arabinose isomerase family. As to quaternary structure, homohexamer. Requires Mn(2+) as cofactor.

It catalyses the reaction beta-L-arabinopyranose = L-ribulose. The protein operates within carbohydrate degradation; L-arabinose degradation via L-ribulose; D-xylulose 5-phosphate from L-arabinose (bacterial route): step 1/3. In terms of biological role, catalyzes the conversion of L-arabinose to L-ribulose. In Escherichia coli O7:K1 (strain IAI39 / ExPEC), this protein is L-arabinose isomerase.